Reading from the N-terminus, the 85-residue chain is Conotoxin Lt28.5 (85 aa).

Positions 1–21 (MPKLEMMLLVLLILPLCYIDA) are cleaved as a signal peptide. Residues 22–40 (VGPPPPWNMEDEIIEHWQK) constitute a propeptide that is removed on maturation.

This sequence belongs to the conotoxin D superfamily. Post-translationally, contains 5 disulfide bonds. Expressed by the venom duct.

The protein resides in the secreted. Functionally, probable neurotoxin. The sequence is that of Conotoxin Lt28.5 from Conus litteratus (Lettered cone).